The following is a 248-amino-acid chain: Ribonuclease PH (248 aa).

Phosphate contacts are provided by residues R86 and 124–126; that span reads GTR.

Belongs to the RNase PH family. In terms of assembly, homohexameric ring arranged as a trimer of dimers.

The catalysed reaction is tRNA(n+1) + phosphate = tRNA(n) + a ribonucleoside 5'-diphosphate. Its function is as follows. Phosphorolytic 3'-5' exoribonuclease that plays an important role in tRNA 3'-end maturation. Removes nucleotide residues following the 3'-CCA terminus of tRNAs; can also add nucleotides to the ends of RNA molecules by using nucleoside diphosphates as substrates, but this may not be physiologically important. Probably plays a role in initiation of 16S rRNA degradation (leading to ribosome degradation) during starvation. The protein is Ribonuclease PH of Listeria monocytogenes serotype 4b (strain CLIP80459).